The chain runs to 155 residues: Ribosome maturation factor RimP (155 aa).

Belongs to the RimP family.

The protein localises to the cytoplasm. In terms of biological role, required for maturation of 30S ribosomal subunits. This chain is Ribosome maturation factor RimP, found in Prochlorococcus marinus (strain MIT 9211).